The primary structure comprises 271 residues: Probable ribosomal RNA small subunit methyltransferase A (271 aa).

S-adenosyl-L-methionine contacts are provided by His-19, Leu-21, Gly-46, Glu-67, Asp-92, and Asn-107.

Belongs to the class I-like SAM-binding methyltransferase superfamily. rRNA adenine N(6)-methyltransferase family. RsmA subfamily.

It localises to the cytoplasm. Functionally, specifically dimethylates two adjacent adenosines in the loop of a conserved hairpin near the 3'-end of 16S rRNA in the 30S particle. May play a critical role in biogenesis of 30S subunits. This is Probable ribosomal RNA small subunit methyltransferase A from Methanosarcina mazei (strain ATCC BAA-159 / DSM 3647 / Goe1 / Go1 / JCM 11833 / OCM 88) (Methanosarcina frisia).